The sequence spans 167 residues: Endoribonuclease YbeY (167 aa).

Residues His-131, His-135, and His-141 each contribute to the Zn(2+) site.

The protein belongs to the endoribonuclease YbeY family. Zn(2+) is required as a cofactor.

It is found in the cytoplasm. Functionally, single strand-specific metallo-endoribonuclease involved in late-stage 70S ribosome quality control and in maturation of the 3' terminus of the 16S rRNA. The chain is Endoribonuclease YbeY from Rickettsia rickettsii (strain Iowa).